A 448-amino-acid chain; its full sequence is Phosphoglucosamine mutase (448 aa).

Residue serine 104 is the Phosphoserine intermediate of the active site. The Mg(2+) site is built by serine 104, aspartate 245, aspartate 247, and aspartate 249. The residue at position 104 (serine 104) is a Phosphoserine.

This sequence belongs to the phosphohexose mutase family. Mg(2+) is required as a cofactor. Post-translationally, activated by phosphorylation.

It catalyses the reaction alpha-D-glucosamine 1-phosphate = D-glucosamine 6-phosphate. In terms of biological role, catalyzes the conversion of glucosamine-6-phosphate to glucosamine-1-phosphate. This chain is Phosphoglucosamine mutase, found in Caulobacter vibrioides (strain ATCC 19089 / CIP 103742 / CB 15) (Caulobacter crescentus).